The following is a 239-amino-acid chain: Fatty acid metabolism regulator protein (239 aa).

Residues 6–74 (QSPAGFAEEY…HGKPTKINNF (69 aa)) form the HTH gntR-type domain. The H-T-H motif DNA-binding region spans 34 to 53 (ERELSELIGVTRTTLREVLQ).

As to quaternary structure, homodimer.

The protein localises to the cytoplasm. In terms of biological role, multifunctional regulator of fatty acid metabolism. This is Fatty acid metabolism regulator protein from Pectobacterium atrosepticum (strain SCRI 1043 / ATCC BAA-672) (Erwinia carotovora subsp. atroseptica).